A 104-amino-acid chain; its full sequence is MKKILFLMVALATAALANDGDVANQTLKAYSMIAAGLGLGLAALGGAIGMGHTAAATIAGTARNPGLGAKLMTTMFIALAMIEAQVIYALVIALIALYANPYLG.

The next 2 membrane-spanning stretches (helical) occupy residues 31-51 and 75-95; these read SMIA…IGMG and MFIA…IALI.

Belongs to the ATPase C chain family. In terms of assembly, F-type ATPases have 2 components, F(1) - the catalytic core - and F(0) - the membrane proton channel. F(1) has five subunits: alpha(3), beta(3), gamma(1), delta(1), epsilon(1). F(0) has three main subunits: a(1), b(2) and c(10-14). The alpha and beta chains form an alternating ring which encloses part of the gamma chain. F(1) is attached to F(0) by a central stalk formed by the gamma and epsilon chains, while a peripheral stalk is formed by the delta and b chains.

The protein localises to the cell inner membrane. Functionally, f(1)F(0) ATP synthase produces ATP from ADP in the presence of a proton or sodium gradient. F-type ATPases consist of two structural domains, F(1) containing the extramembraneous catalytic core and F(0) containing the membrane proton channel, linked together by a central stalk and a peripheral stalk. During catalysis, ATP synthesis in the catalytic domain of F(1) is coupled via a rotary mechanism of the central stalk subunits to proton translocation. Key component of the F(0) channel; it plays a direct role in translocation across the membrane. A homomeric c-ring of between 10-14 subunits forms the central stalk rotor element with the F(1) delta and epsilon subunits. The chain is ATP synthase subunit c from Sulfurimonas denitrificans (strain ATCC 33889 / DSM 1251) (Thiomicrospira denitrificans (strain ATCC 33889 / DSM 1251)).